The following is a 569-amino-acid chain: Urease subunit alpha (569 aa).

The 439-residue stretch at Gly-131–Leu-569 folds into the Urease domain. Ni(2+) contacts are provided by His-136, His-138, and Lys-219. Lys-219 carries the N6-carboxylysine modification. Residue His-221 coordinates substrate. 2 residues coordinate Ni(2+): His-248 and His-274. The active-site Proton donor is the His-322. Asp-362 contributes to the Ni(2+) binding site.

It belongs to the metallo-dependent hydrolases superfamily. Urease alpha subunit family. Heterotrimer of UreA (gamma), UreB (beta) and UreC (alpha) subunits. Three heterotrimers associate to form the active enzyme. The cofactor is Ni cation. Carboxylation allows a single lysine to coordinate two nickel ions.

Its subcellular location is the cytoplasm. It carries out the reaction urea + 2 H2O + H(+) = hydrogencarbonate + 2 NH4(+). The protein operates within nitrogen metabolism; urea degradation; CO(2) and NH(3) from urea (urease route): step 1/1. This is Urease subunit alpha from Prochlorococcus marinus (strain NATL2A).